The primary structure comprises 344 residues: UDP-N-acetylglucosamine transporter UGNT1 (344 aa).

Residues 1-23 (MRNNPVLPVSDPPLAGENDSDGK) form a disordered region. A run of 9 helical transmembrane segments spans residues 41–61 (YAALSYMACAVMLVLFNKAAL), 66–86 (FPCVNVITLFQMVSSSLFLYA), 92–112 (IISFTAADSFSIDSASTFVPV), 114–134 (TLFHTLPLAIAYLLYMLASMA), 167–187 (YTRSIIGSVGIILLGAFFAGA), 194–214 (FYGYGVVFLANISTAVYLATI), 226–246 (FGLMWSNGIICGPILMIWTFI), 264–284 (FMVVLLCSCVLAFVLNYCIFL), and 304–324 (FTVGLGWMLFGGLPFDLMNVI).

Belongs to the TPT transporter family. UGnT (TC 2.A.7.15) subfamily. In terms of tissue distribution, expressed in roots, leaves, stems, flowers and siliques.

The protein localises to the golgi apparatus membrane. Functionally, mediates the transport of UDP-N-acetylglucosamine (UDP-GlcNAc) across the Golgi apparatus membrane. Delivers an essential substrate for the maturation of N-glycans and the GlcNAc-containing glycosyl inositol phosphorylceramide (GIPC) class of sphingolipids in the Golgi apparatus. This is UDP-N-acetylglucosamine transporter UGNT1 from Arabidopsis thaliana (Mouse-ear cress).